We begin with the raw amino-acid sequence, 479 residues long: Alpha,alpha-trehalose-phosphate synthase [UDP-forming] 2 (479 aa).

D-glucose 6-phosphate-binding residues include Tyr96 and Asp150. Arg287 and Lys292 together coordinate UDP. UDP-alpha-D-glucose contacts are provided by Arg287 and Lys292. Arg325 is a D-glucose 6-phosphate binding site. Residues 363 to 364 (SV) and 390 to 394 (LVSFE) contribute to the UDP site. 386–394 (DGMNLVSFE) serves as a coordination point for UDP-alpha-D-glucose.

The protein belongs to the glycosyltransferase 20 family.

It carries out the reaction D-glucose 6-phosphate + UDP-alpha-D-glucose = alpha,alpha-trehalose 6-phosphate + UDP + H(+). Its pathway is carbohydrate biosynthesis. In terms of biological role, synthase catalytic subunit of the trehalose synthase complex that catalyzes the production of trehalose from glucose-6-phosphate and UDP-alpha-D-glucose in a two step process. The disaccharide trehalose serves as a storage carbohydrate that is mobilized during conidial germination. Regulates the level of trehalose as a protectant for cell integrity during thermal and oxidative stress. The chain is Alpha,alpha-trehalose-phosphate synthase [UDP-forming] 2 from Aspergillus fumigatus (strain ATCC MYA-4609 / CBS 101355 / FGSC A1100 / Af293) (Neosartorya fumigata).